A 556-amino-acid chain; its full sequence is Formate--tetrahydrofolate ligase (556 aa).

Residue 65–72 (TPAGEGKS) coordinates ATP.

This sequence belongs to the formate--tetrahydrofolate ligase family.

The catalysed reaction is (6S)-5,6,7,8-tetrahydrofolate + formate + ATP = (6R)-10-formyltetrahydrofolate + ADP + phosphate. Its pathway is one-carbon metabolism; tetrahydrofolate interconversion. The protein is Formate--tetrahydrofolate ligase of Streptococcus pneumoniae serotype 4 (strain ATCC BAA-334 / TIGR4).